The primary structure comprises 196 residues: Protein GrpE (196 aa).

The segment at 1–39 (MSSKEQKTPEGQAPEEIIMDQHEEIEAVEPEASAEQVDP) is disordered.

The protein belongs to the GrpE family. As to quaternary structure, homodimer.

It is found in the cytoplasm. Participates actively in the response to hyperosmotic and heat shock by preventing the aggregation of stress-denatured proteins, in association with DnaK and GrpE. It is the nucleotide exchange factor for DnaK and may function as a thermosensor. Unfolded proteins bind initially to DnaJ; upon interaction with the DnaJ-bound protein, DnaK hydrolyzes its bound ATP, resulting in the formation of a stable complex. GrpE releases ADP from DnaK; ATP binding to DnaK triggers the release of the substrate protein, thus completing the reaction cycle. Several rounds of ATP-dependent interactions between DnaJ, DnaK and GrpE are required for fully efficient folding. The polypeptide is Protein GrpE (Escherichia coli (strain SMS-3-5 / SECEC)).